The following is a 990-amino-acid chain: A-type ATP synthase subunit B (990 aa).

One can recognise a DOD-type homing endonuclease domain in the interval 491–614 (VAGLIASDGS…LQLLLKRLGV (124 aa)).

It belongs to the ATPase alpha/beta chains family. In terms of assembly, has multiple subunits with at least A(3), B(3), C, D, E, F, H, I and proteolipid K(x). Post-translationally, this protein undergoes a protein self splicing that involves a post-translational excision of the VDE intervening region (intein) followed by peptide ligation.

The protein resides in the cell membrane. Component of the A-type ATP synthase that produces ATP from ADP in the presence of a proton gradient across the membrane. The B chain is a regulatory subunit. The polypeptide is A-type ATP synthase subunit B (Methanopyrus kandleri (strain AV19 / DSM 6324 / JCM 9639 / NBRC 100938)).